Consider the following 419-residue polypeptide: MPVSSDCQILKEDNVTHSFCGLACVGWLYQKIKDSFFLILGTHTCAHFLQNALGMMIFAKPRFGVALIEEADLSRAEPQLEAVIEEIKRDHNPSVIFLLSSCTPEVMKVDFKGLAHHLSTDKTPVLFVPASGLVFNFTQAEDSVLQALVPFCPEAPAGEKKVVFVGSVNDITADDLRTEAEQLGIPVGGFLPESRFDKLPAIGPDTVLAPIQPYLSRVCSRLNRERGSQVLTSLFPFGPDGTKTFWEDLAAMFGIKVDLSDRAEAAWEKIKPQTDLLKGKKIFLTADTMMELPLARFLKNAGAEVVECSSAYINKKFHARELEALEGVKVVEQPNFHRQLEEIRATRPDMIVTSLMTANPFVGNGFIVKWSMEFTLMSIHSWSGVFTLANLFVSPLLRRESLPEFDESVWLEGVMPSAQ.

Positions 20, 45, and 102 each coordinate [4Fe-4S] cluster.

The protein belongs to the BchN/ChlN family. In terms of assembly, protochlorophyllide reductase is composed of three subunits; BchL, BchN and BchB. Forms a heterotetramer of two BchB and two BchN subunits. The cofactor is [4Fe-4S] cluster.

It catalyses the reaction chlorophyllide a + oxidized 2[4Fe-4S]-[ferredoxin] + 2 ADP + 2 phosphate = protochlorophyllide a + reduced 2[4Fe-4S]-[ferredoxin] + 2 ATP + 2 H2O. The protein operates within porphyrin-containing compound metabolism; bacteriochlorophyll biosynthesis (light-independent). Functionally, component of the dark-operative protochlorophyllide reductase (DPOR) that uses Mg-ATP and reduced ferredoxin to reduce ring D of protochlorophyllide (Pchlide) to form chlorophyllide a (Chlide). This reaction is light-independent. The NB-protein (BchN-BchB) is the catalytic component of the complex. The protein is Light-independent protochlorophyllide reductase subunit N of Chlorobaculum tepidum (strain ATCC 49652 / DSM 12025 / NBRC 103806 / TLS) (Chlorobium tepidum).